A 632-amino-acid chain; its full sequence is Transcription factor asR4 (632 aa).

The zn(2)-C6 fungal-type DNA-binding region spans 26–52 (CDSCNKSKTKCPGGNPCPLCQCSGIRC). A compositionally biased stretch (polar residues) spans 101 to 111 (HISSNPSPVGS). Disordered stretches follow at residues 101–129 (HISSNPSPVGSQSQQQQHPQQAGQQQQQQ), 270–311 (SNEY…GDGH), and 324–356 (TSASSIVEQQSIPTSPVTVAPMSPAKSSSVPRT). Over residues 112–129 (QSQQQQHPQQAGQQQQQQ) the composition is skewed to low complexity. 3 stretches are compositionally biased toward polar residues: residues 270-286 (SNEYSTSSNSKPSTTDD), 294-306 (PDSSTTHRPSSSV), and 329-340 (IVEQQSIPTSPV).

Its subcellular location is the nucleus. Functionally, transcription factor; part of the gene cluster that mediates the biosynthesis of xenovulene A, an unusual meroterpenoid that has potent inhibitory effects on the human gamma-aminobutyrate A (GABAA) benzodiazepine receptor. The chain is Transcription factor asR4 from Sarocladium schorii (Acremonium strictum (strain IMI 501407)).